The chain runs to 454 residues: Mitochondrial distribution and morphology protein 10 (454 aa).

The protein belongs to the MDM10 family. As to quaternary structure, component of the ER-mitochondria encounter structure (ERMES) or MDM complex, composed of MMM1, MDM10, MDM12 and MDM34. Associates with the mitochondrial outer membrane sorting assembly machinery SAM(core) complex.

It is found in the mitochondrion outer membrane. Functionally, component of the ERMES/MDM complex, which serves as a molecular tether to connect the endoplasmic reticulum and mitochondria. Components of this complex are involved in the control of mitochondrial shape and protein biogenesis and may function in phospholipid exchange. MDM10 is involved in the late assembly steps of the general translocase of the mitochondrial outer membrane (TOM complex). Functions in the TOM40-specific route of the assembly of outer membrane beta-barrel proteins, including the association of TOM40 with the receptor TOM22 and small TOM proteins. Can associate with the SAM(core) complex as well as the MDM12-MMM1 complex, both involved in late steps of the major beta-barrel assembly pathway, that is responsible for biogenesis of all outer membrane beta-barrel proteins. May act as a switch that shuttles between both complexes and channels precursor proteins into the TOM40-specific pathway. Plays a role in mitochondrial morphology and in the inheritance of mitochondria. This Candida tropicalis (strain ATCC MYA-3404 / T1) (Yeast) protein is Mitochondrial distribution and morphology protein 10.